Reading from the N-terminus, the 89-residue chain is Small ribosomal subunit protein uS15 (89 aa).

Belongs to the universal ribosomal protein uS15 family. Part of the 30S ribosomal subunit. Forms a bridge to the 50S subunit in the 70S ribosome, contacting the 23S rRNA.

Functionally, one of the primary rRNA binding proteins, it binds directly to 16S rRNA where it helps nucleate assembly of the platform of the 30S subunit by binding and bridging several RNA helices of the 16S rRNA. In terms of biological role, forms an intersubunit bridge (bridge B4) with the 23S rRNA of the 50S subunit in the ribosome. The chain is Small ribosomal subunit protein uS15 from Methylobacterium sp. (strain 4-46).